Consider the following 213-residue polypeptide: Thiamine-phosphate synthase (213 aa).

Residues 39 to 43 (QYRDK) and Asp71 contribute to the 4-amino-2-methyl-5-(diphosphooxymethyl)pyrimidine site. Mg(2+) is bound by residues Asp72 and Asp91. Ser108 is a 4-amino-2-methyl-5-(diphosphooxymethyl)pyrimidine binding site. Residue 135–137 (TDT) coordinates 2-[(2R,5Z)-2-carboxy-4-methylthiazol-5(2H)-ylidene]ethyl phosphate. Residue Lys138 participates in 4-amino-2-methyl-5-(diphosphooxymethyl)pyrimidine binding. 2-[(2R,5Z)-2-carboxy-4-methylthiazol-5(2H)-ylidene]ethyl phosphate is bound by residues Gly165 and 185–186 (VS).

This sequence belongs to the thiamine-phosphate synthase family. Requires Mg(2+) as cofactor.

It catalyses the reaction 2-[(2R,5Z)-2-carboxy-4-methylthiazol-5(2H)-ylidene]ethyl phosphate + 4-amino-2-methyl-5-(diphosphooxymethyl)pyrimidine + 2 H(+) = thiamine phosphate + CO2 + diphosphate. It carries out the reaction 2-(2-carboxy-4-methylthiazol-5-yl)ethyl phosphate + 4-amino-2-methyl-5-(diphosphooxymethyl)pyrimidine + 2 H(+) = thiamine phosphate + CO2 + diphosphate. The catalysed reaction is 4-methyl-5-(2-phosphooxyethyl)-thiazole + 4-amino-2-methyl-5-(diphosphooxymethyl)pyrimidine + H(+) = thiamine phosphate + diphosphate. Its pathway is cofactor biosynthesis; thiamine diphosphate biosynthesis; thiamine phosphate from 4-amino-2-methyl-5-diphosphomethylpyrimidine and 4-methyl-5-(2-phosphoethyl)-thiazole: step 1/1. Its function is as follows. Condenses 4-methyl-5-(beta-hydroxyethyl)thiazole monophosphate (THZ-P) and 2-methyl-4-amino-5-hydroxymethyl pyrimidine pyrophosphate (HMP-PP) to form thiamine monophosphate (TMP). This chain is Thiamine-phosphate synthase, found in Thermoplasma acidophilum (strain ATCC 25905 / DSM 1728 / JCM 9062 / NBRC 15155 / AMRC-C165).